The following is a 217-amino-acid chain: MDTKRVGILVVDLSQWGRKEHFEAFQSFAQCTFSQTVQLDITSLLKTVKQNGYKFYPTFIYIISLLVNKHAEFRMAMKDGELVIWDSVNPGYNIFHEQTETFSSLWSYYHKDINRFLKTYSEDIAQYGDDLAYFPKEFIENMFFVSANPWVSFTSFNLNMANINNFFAPVFTIGKYYTQGDKVLMPLAIQVHHAVCDGFHVGRLLNEIQQYCDEGCK.

H193 (proton acceptor) is an active-site residue.

The protein belongs to the chloramphenicol acetyltransferase family. In terms of assembly, homotrimer.

The enzyme catalyses chloramphenicol + acetyl-CoA = chloramphenicol 3-acetate + CoA. This enzyme is an effector of chloramphenicol resistance in bacteria. The chain is Chloramphenicol acetyltransferase (cat) from Proteus mirabilis.